Reading from the N-terminus, the 322-residue chain is Cytochrome f (322 aa).

An N-terminal signal peptide occupies residues 1-35 (MQNRNIFSWVKEQTTRSISVSIMILIYVITWTSIS). Residues tyrosine 38, cysteine 58, cysteine 61, and histidine 62 each contribute to the heme site. The helical transmembrane segment at 288 to 308 (VQGLFFFFASVILAQIFLVLK) threads the bilayer.

This sequence belongs to the cytochrome f family. As to quaternary structure, the 4 large subunits of the cytochrome b6-f complex are cytochrome b6, subunit IV (17 kDa polypeptide, petD), cytochrome f and the Rieske protein, while the 4 small subunits are PetG, PetL, PetM and PetN. The complex functions as a dimer. Heme is required as a cofactor.

It localises to the plastid. The protein localises to the chloroplast thylakoid membrane. Its function is as follows. Component of the cytochrome b6-f complex, which mediates electron transfer between photosystem II (PSII) and photosystem I (PSI), cyclic electron flow around PSI, and state transitions. The polypeptide is Cytochrome f (Nandina domestica (Heavenly bamboo)).